A 227-amino-acid polypeptide reads, in one-letter code: Glutathione S-transferase U17 (227 aa).

The GST N-terminal domain maps to 4–83; the sequence is SDVKLIGAWA…YIDDTWSSSG (80 aa). Glutathione is bound by residues 14–15, 40–41, 54–55, and 67–68; these read SP, SK, KI, and ES. A GST C-terminal domain is found at 90-222; the sequence is DPYDRAMARF…KLAEFAKKIF (133 aa).

It belongs to the GST superfamily. Tau family.

The protein resides in the cytoplasm. It localises to the cytosol. It catalyses the reaction RX + glutathione = an S-substituted glutathione + a halide anion + H(+). In terms of biological role, involved in light signaling, mainly phyA-mediated photomorphogenesis and in the integration of various phytohormone signals to modulate various aspects of plant development by affecting glutathione pools. In vitro, possesses glutathione S-transferase activity toward 1-chloro-2,4-dinitrobenzene (CDNB) and benzyl isothiocyanate (BITC). This chain is Glutathione S-transferase U17 (GSTU17), found in Arabidopsis thaliana (Mouse-ear cress).